Here is an 823-residue protein sequence, read N- to C-terminus: Bifunctional enzyme flvA (823 aa).

A pyridoxal 5'-phosphate-dependent lyase region spans residues 56–535 (TAKFEMALMP…QRLYDAKFYI (480 aa)). An N6-(pyridoxal phosphate)lysine modification is found at K331. Residues 573 to 823 (DFDALQQVSH…TLPMNVPLWL (251 aa)) are alpha-ketoglutarate-dependent oxygenase. 2 residues coordinate Fe cation: H703 and D705.

In the N-terminal section; belongs to the trans-sulfuration enzymes family. This sequence in the C-terminal section; belongs to the iron/ascorbate-dependent oxidoreductase family. Pyridoxal 5'-phosphate serves as cofactor. Fe(2+) is required as a cofactor.

It carries out the reaction O-acetyl-L-homoserine + 3-methyl-2-oxobutanoate = (6S)-6-amino-3,3-dimethyl-2-oxoheptanedioate + acetate + H(+). The enzyme catalyses (6S)-3,3-dimethylpiperidine-2,6-dicarboxylate + 2-oxoglutarate + AH2 + O2 + H(+) = (2S)-5,5-dimethylpiperidine-2-carboxylate + succinate + A + 2 CO2 + H2O. The protein operates within secondary metabolite biosynthesis; terpenoid biosynthesis. Functionally, bifunctional enzyme; part of the gene cluster that mediates the biosynthesis of flavunoidine, an alkaloidal terpenoid with a tetracyclic cage-like core connected to dimethylcadaverine via a C-N bond and acylated with 5,5-dimethyl-L-pipecolate. The tetracyclic core is synthesized by the terpene cyclase flvE and the cytochrome P450 monooxygenase flvD. The terpene cyclase flvE catalyzes the cyclization of farnesyl pyrophosphate (FPP) to form (1R,4R,5S)-(+)-acoradiene and the cytochrome P450 monooxygenase flvD is then responsible for oxidative conversion of (1R,4R,5S)-(+)-acoradiene into the tetracyclic cage present in the final product flavunoidine. In parallel, the N-methyltransferase flvH dimethylates L-lysine to give N,N-dimethyl-L-Lysin which is decarboxylated by flvG to afford dimethylcadaverine. The terpene cyclase-like protein flvF is the enzyme that attaches the dimethylcadaverine precusor at the C-7 of the tetracyclic cage to yield pre-flavunoidine. The cytochrome monooxygenase flvC hydroxylates the C-10 position of pre-flavunoidine whereas the NRPS flvI acylates the terpenoid core at the hydroxylated C-10 with dimethylpipecolate to yield final flavunoidine. The bifunctional enzyme flvA and the dehydrogenase flvB are responsible for the synthesis of the dimethylpipecolate precursor. The PLP-dependent lyase domain of flvA might use L-O-acetyl-homoserine and alpha-keto-isovalerate to form an intermediary ketone that can cyclize intramolecularly to yield an imine. The imine can be reduced by flvB to yield the 6-carboxylated pipecolate. The C-terminal alpha-KG-dependent oxygenase domain of flvA is then proposed to catalyze the decarboxylation to yield dimethylpipecolate. This is Bifunctional enzyme flvA from Aspergillus flavus (strain ATCC 200026 / FGSC A1120 / IAM 13836 / NRRL 3357 / JCM 12722 / SRRC 167).